The following is a 2167-amino-acid chain: Myosin-VIIa (2167 aa).

The Myosin motor domain occupies 63–733; the sequence is QGVEDMISLG…HDLFLEQERD (671 aa). 156 to 163 serves as a coordination point for ATP; it reads GESGAGKT. Actin-binding stretches follow at residues 612 to 634 and 712 to 726; these read LDALMKTLSSCQPFFIRCIKPNE and QLGHTKVFLKDAHDL. IQ domains are found at residues 736-758, 759-788, 805-827, and 828-857; these read LTRKILILQRSIRGWVYRRRFLR, LRAAAITVQRFWKGYAQRKRYRNMRVGYMR, LRGHIVGLQAHARGYLVRREYGH, and KMWAVIKIQSHVRRMIAMRRYRKLRLEHKQ. A coiled-coil region spans residues 886 to 919; the sequence is QHYRDRLHELERREIQEQLENRRRVEVNMNIIND. Positions 1008–1245 constitute a MyTH4 1 domain; sequence YAKKALKHPL…PSWLELQATK (238 aa). One can recognise an FERM 1 domain in the interval 1250–1560; sequence IMLPITFMDG…YFLDGLKKRS (311 aa). Residues 1558–1627 enclose the SH3 domain; sequence KRSKYVIALQ…PAETVYVLPT (70 aa). Phosphoserine occurs at positions 1651 and 1654. Residues 1701–1849 form the MyTH4 2 domain; the sequence is YSRDPIKAPL…PHQVEVEAIQ (149 aa). An FERM 2 domain is found at 1855–2158; it reads IFHKVYFPDD…SYISLMLTNM (304 aa). T2045 carries the phosphothreonine modification.

Belongs to the TRAFAC class myosin-kinesin ATPase superfamily. Myosin family. In terms of assembly, homodimerizes in a two headed molecule through the formation of a coiled-coil rod. Homodimers motility is approximately 8-10 times slower than that of myosin V, and its step size is 30 nm, which is consistent with the presence of five IQ motifs in its neck region. Interacts with Cad99C (via the cytoplasmic domain). Interacts with zip and Sans. Expressed in the setae, micro- and macrochaetae on the head, thorax and wing.

The protein localises to the cytoplasm. The protein resides in the cell cortex. Its subcellular location is the cell projection. It is found in the microvillus. Its function is as follows. Myosins are actin-based motor molecules with ATPase activity. Unconventional myosins serve in intracellular movements: can function in cells as a single-molecule cargo transporter. A very slow and high-duty-ratio motor, may be suitable for tension maintenance of actin filaments. Their highly divergent tails are presumed to bind to membranous compartments, which would be moved relative to actin filaments. Plays a key role in the formation of cellular projections and other actin-based functions required for embryonic and larval viability. Necessary for auditory transduction: plays a role in Johnston's organ organization by functioning in scolopidial apical attachment and therefore to acoustic stimulus propagation from the antenna a2/a3 joint to transducing elements. Interaction with the myosin zip may be important for its function in scolopidial apical attachment. During oogenesis it has Cad99c-dependent and Cad99c-independent roles in regulating the shape and spacing of the follicle cell microvilli which secrete eggshell material such as the vitelline membrane. May be required for the normal expression of Cad99c in the follicle cell microvilli. The polypeptide is Myosin-VIIa (Drosophila melanogaster (Fruit fly)).